The sequence spans 166 residues: MFPMVTEFMNYGQQTVRAARYIGQGFIITLSHANRLPVTIQYPYEKLITSERFRGRIHFEFDKCIACEVCVRVCPIDLPVVDWKLETDIRKKRLLNYSIDFGICIFCGNCVEYCPTNCLSMTEEYELSTYHRHELNYNQIALGRLPMSIIDDYTIRTILNLPEIKT.

4Fe-4S ferredoxin-type domains are found at residues 55-84 (GRIH…VDWK) and 95-124 (LNYS…MTEE). Residues Cys-64, Cys-67, Cys-70, Cys-74, Cys-104, Cys-107, Cys-110, and Cys-114 each coordinate [4Fe-4S] cluster.

Belongs to the complex I 23 kDa subunit family. NDH is composed of at least 16 different subunits, 5 of which are encoded in the nucleus. The cofactor is [4Fe-4S] cluster.

It is found in the plastid. Its subcellular location is the chloroplast thylakoid membrane. The enzyme catalyses a plastoquinone + NADH + (n+1) H(+)(in) = a plastoquinol + NAD(+) + n H(+)(out). It catalyses the reaction a plastoquinone + NADPH + (n+1) H(+)(in) = a plastoquinol + NADP(+) + n H(+)(out). NDH shuttles electrons from NAD(P)H:plastoquinone, via FMN and iron-sulfur (Fe-S) centers, to quinones in the photosynthetic chain and possibly in a chloroplast respiratory chain. The immediate electron acceptor for the enzyme in this species is believed to be plastoquinone. Couples the redox reaction to proton translocation, and thus conserves the redox energy in a proton gradient. This chain is NAD(P)H-quinone oxidoreductase subunit I, chloroplastic, found in Hofmeisteria fasciculata (Helogyne fasciculata).